A 510-amino-acid chain; its full sequence is Ankyrin repeat domain-containing protein 13C-A (510 aa).

Residues 1–19 (MTGEKIRSLHKDQKPSKDE) are compositionally biased toward basic and acidic residues. Residues 1-35 (MTGEKIRSLHKDQKPSKDEDLLEPDEEATAGGTFT) are disordered. ANK repeat units follow at residues 80 to 111 (DVYF…QKDS), 112 to 141 (HGNT…PVKV), and 145 to 174 (QGWS…QQSR).

It is found in the endoplasmic reticulum membrane. Its function is as follows. Acts as a molecular chaperone for G protein-coupled receptors, regulating their biogenesis and exit from the ER. This chain is Ankyrin repeat domain-containing protein 13C-A (ankrd13c-a), found in Xenopus laevis (African clawed frog).